Consider the following 492-residue polypeptide: Protein nucleotidyltransferase YdiU (492 aa).

ATP contacts are provided by Gly-101, Gly-103, Arg-104, Lys-124, Asp-136, Gly-137, Arg-187, and Arg-194. The active-site Proton acceptor is the Asp-268. Mg(2+) is bound by residues Asn-269 and Asp-278. An ATP-binding site is contributed by Asp-278.

Belongs to the SELO family. It depends on Mg(2+) as a cofactor. The cofactor is Mn(2+).

It carries out the reaction L-seryl-[protein] + ATP = 3-O-(5'-adenylyl)-L-seryl-[protein] + diphosphate. The enzyme catalyses L-threonyl-[protein] + ATP = 3-O-(5'-adenylyl)-L-threonyl-[protein] + diphosphate. The catalysed reaction is L-tyrosyl-[protein] + ATP = O-(5'-adenylyl)-L-tyrosyl-[protein] + diphosphate. It catalyses the reaction L-histidyl-[protein] + UTP = N(tele)-(5'-uridylyl)-L-histidyl-[protein] + diphosphate. It carries out the reaction L-seryl-[protein] + UTP = O-(5'-uridylyl)-L-seryl-[protein] + diphosphate. The enzyme catalyses L-tyrosyl-[protein] + UTP = O-(5'-uridylyl)-L-tyrosyl-[protein] + diphosphate. Functionally, nucleotidyltransferase involved in the post-translational modification of proteins. It can catalyze the addition of adenosine monophosphate (AMP) or uridine monophosphate (UMP) to a protein, resulting in modifications known as AMPylation and UMPylation. The sequence is that of Protein nucleotidyltransferase YdiU from Corynebacterium efficiens (strain DSM 44549 / YS-314 / AJ 12310 / JCM 11189 / NBRC 100395).